Reading from the N-terminus, the 452-residue chain is Probable ECA polymerase (452 aa).

The next 11 membrane-spanning stretches (helical) occupy residues Phe-6–Phe-26, Val-37–Leu-57, Val-63–Gly-83, Val-118–Leu-138, Gly-155–Leu-175, Ala-181–Gly-201, Ile-207–Trp-227, Met-228–Tyr-248, Leu-341–Ile-361, Tyr-378–Ala-398, and Val-410–Phe-430.

It belongs to the WzyE family. In terms of assembly, probably part of a complex composed of WzxE, WzyE and WzzE.

It localises to the cell inner membrane. It functions in the pathway bacterial outer membrane biogenesis; enterobacterial common antigen biosynthesis. Probably involved in the polymerization of enterobacterial common antigen (ECA) trisaccharide repeat units. The sequence is that of Probable ECA polymerase from Salmonella choleraesuis (strain SC-B67).